A 680-amino-acid polypeptide reads, in one-letter code: DNA ligase (680 aa).

NAD(+) contacts are provided by residues 38 to 42 (DAEYD), 87 to 88 (SL), and E119. Residue K121 is the N6-AMP-lysine intermediate of the active site. 4 residues coordinate NAD(+): R142, E179, K296, and K320. Zn(2+) contacts are provided by C414, C417, C432, and C438. A BRCT domain is found at 597–680 (IEDLPLKGLT…DLLRKHGRLE (84 aa)).

The protein belongs to the NAD-dependent DNA ligase family. LigA subfamily. Mg(2+) is required as a cofactor. It depends on Mn(2+) as a cofactor.

The catalysed reaction is NAD(+) + (deoxyribonucleotide)n-3'-hydroxyl + 5'-phospho-(deoxyribonucleotide)m = (deoxyribonucleotide)n+m + AMP + beta-nicotinamide D-nucleotide.. In terms of biological role, DNA ligase that catalyzes the formation of phosphodiester linkages between 5'-phosphoryl and 3'-hydroxyl groups in double-stranded DNA using NAD as a coenzyme and as the energy source for the reaction. It is essential for DNA replication and repair of damaged DNA. The polypeptide is DNA ligase (Cellvibrio japonicus (strain Ueda107) (Pseudomonas fluorescens subsp. cellulosa)).